We begin with the raw amino-acid sequence, 454 residues long: Probable DNA primase large subunit (454 aa).

[4Fe-4S] cluster is bound by residues C280, C359, C375, and C415.

This sequence belongs to the eukaryotic-type primase large subunit family. In terms of assembly, heterodimer of a small subunit and a large subunit. The cofactor is [4Fe-4S] cluster.

Functionally, DNA primase is the polymerase that synthesizes small RNA primers for the Okazaki fragments made during discontinuous DNA replication. The polypeptide is Probable DNA primase large subunit (Arabidopsis thaliana (Mouse-ear cress)).